Consider the following 274-residue polypeptide: Large ribosomal subunit protein uL2cz/uL2cy (274 aa).

2 disordered regions span residues 1–33 and 223–265; these read MAIHLYKTSTPSTRKRAVDSQGKSNPRNHLIYG and MNPV…KYND.

This sequence belongs to the universal ribosomal protein uL2 family. Part of the 50S ribosomal subunit.

Its subcellular location is the plastid. It localises to the chloroplast. The sequence is that of Large ribosomal subunit protein uL2cz/uL2cy (rpl2-A) from Pelargonium hortorum (Common geranium).